Here is a 412-residue protein sequence, read N- to C-terminus: Histidine--tRNA ligase (412 aa).

Belongs to the class-II aminoacyl-tRNA synthetase family. Homodimer.

The protein resides in the cytoplasm. It catalyses the reaction tRNA(His) + L-histidine + ATP = L-histidyl-tRNA(His) + AMP + diphosphate + H(+). In Maridesulfovibrio salexigens (strain ATCC 14822 / DSM 2638 / NCIMB 8403 / VKM B-1763) (Desulfovibrio salexigens), this protein is Histidine--tRNA ligase.